The sequence spans 753 residues: Neuroendocrine convertase 1 (753 aa).

A signal peptide spans 1 to 27 (MGRRAWTLQCTAFSLFCAWCAMNSVKA). The propeptide occupies 28-110 (KKQFVNEWAA…QQYEKERSKR (83 aa)). In terms of domain architecture, Peptidase S8 spans 129–450 (QWYLQDTRMT…FGLLNAKALV (322 aa)). Residue aspartate 167 is the Charge relay system of the active site. The N-linked (GlcNAc...) asparagine glycan is linked to asparagine 173. Catalysis depends on histidine 208, which acts as the Charge relay system. 2 cysteine pairs are disulfide-bonded: cysteine 225–cysteine 374 and cysteine 317–cysteine 347. Serine 382 (charge relay system) is an active-site residue. Asparagine 401 carries an N-linked (GlcNAc...) asparagine glycan. The 138-residue stretch at 460–597 (SVPEKKECVV…KLILHGTSSQ (138 aa)) folds into the P/Homo B domain. Cysteine 467 and cysteine 494 are oxidised to a cystine. Disordered stretches follow at residues 617-657 (RRGV…RRDE) and 676-695 (SKNSPSKQSPKKPPSAKPNI).

It belongs to the peptidase S8 family. Furin subfamily. The cofactor is Ca(2+).

It localises to the cytoplasmic vesicle. It is found in the secretory vesicle. The catalysed reaction is Release of protein hormones, neuropeptides and renin from their precursors, generally by hydrolysis of -Lys-Arg-|- bonds.. In terms of biological role, involved in the processing of hormone and other protein precursors at sites comprised of pairs of basic amino acid residues. Substrates include POMC, renin, enkephalin, dynorphin, somatostatin, insulin and AGRP. The sequence is that of Neuroendocrine convertase 1 (PCSK1) from Bos taurus (Bovine).